Reading from the N-terminus, the 443-residue chain is Trigger factor (443 aa).

Positions 165–250 (GDQIVMDFLG…VKEVKKPVPA (86 aa)) constitute a PPIase FKBP-type domain.

The protein belongs to the FKBP-type PPIase family. Tig subfamily.

The protein resides in the cytoplasm. It catalyses the reaction [protein]-peptidylproline (omega=180) = [protein]-peptidylproline (omega=0). Functionally, involved in protein export. Acts as a chaperone by maintaining the newly synthesized protein in an open conformation. Functions as a peptidyl-prolyl cis-trans isomerase. This chain is Trigger factor, found in Roseobacter denitrificans (strain ATCC 33942 / OCh 114) (Erythrobacter sp. (strain OCh 114)).